The primary structure comprises 469 residues: tRNA (cytosine(72)-C(5))-methyltransferase NSUN6 (469 aa).

Residues glutamine 111–tyrosine 203 form the PUA domain. Residues cysteine 242–lysine 248, aspartate 266, aspartate 293, and aspartate 323 contribute to the S-adenosyl-L-methionine site. Cysteine 373 (nucleophile) is an active-site residue. Lysine 419 is subject to N6-acetyllysine.

Belongs to the class I-like SAM-binding methyltransferase superfamily. RsmB/NOP family.

The protein resides in the cytoplasm. The catalysed reaction is cytidine(72) in tRNA(Thr) + S-adenosyl-L-methionine = 5-methylcytidine(72) in tRNA(Thr) + S-adenosyl-L-homocysteine + H(+). It carries out the reaction cytidine(72) in tRNA(Cys) + S-adenosyl-L-methionine = 5-methylcytidine(72) in tRNA(Cys) + S-adenosyl-L-homocysteine + H(+). S-adenosyl-L-methionine-dependent methyltransferase that specifically methylates the C5 position of cytosine 72 in tRNA(Thr)(TGT) and tRNA(Cys)(GCA). In vitro also methylates tRNA(Thr)(AGT). Methylation requires, in the acceptor stem region, the presence of the 3'-CCA terminus, the target site C72, the discriminator base U73, and the second and third base pairs (2:71 and 3:70) in the tRNA substrates. In Homo sapiens (Human), this protein is tRNA (cytosine(72)-C(5))-methyltransferase NSUN6.